The following is a 51-amino-acid chain: Large ribosomal subunit protein eL39 (51 aa).

The protein belongs to the eukaryotic ribosomal protein eL39 family. In terms of assembly, component of the large ribosomal subunit. Interacts with IMPACT.

The protein localises to the cytoplasm. Functionally, RNA-binding component of the large ribosomal subunit. The ribosome is a large ribonucleoprotein complex responsible for the synthesis of proteins in the cell. The protein is Large ribosomal subunit protein eL39 (Rpl39) of Mus musculus (Mouse).